A 383-amino-acid polypeptide reads, in one-letter code: LIM/homeobox protein Lhx3 (383 aa).

LIM zinc-binding domains follow at residues 14 to 73 (PLCA…RFGT) and 73 to 136 (TKCA…AKQR). Thr48 bears the Phosphothreonine mark. Ser56 is modified (phosphoserine). The homeobox DNA-binding region spans 142-201 (AKRPRTTITAKQLETLKSAYNTSPKPARHVREQLSSETGLDMRVVQVWFQNRRAKEKRLK). The disordered stretch occupies residues 197–383 (EKRLKKDAGR…WLDEVDHAQF (187 aa)). Phosphotyrosine is present on Tyr212. Residue Ser223 is modified to Phosphoserine. Low complexity predominate over residues 307–334 (PAALQSLPGPQPLLSSLVYPEAGLGLVP). Over residues 335 to 344 (AGPPGGPPPM) the composition is skewed to pro residues.

In terms of assembly, interacts with POU1F1. At neuronal promoters, interacts with LDB1, in motor neurons LDB1 is displaced by ISL1 and a ternary complex is formed in which ISL1 contacts both LHX3 and LDB1; allosteric structural changes in the DNA binding domain of LHX3, induced by the ISL1-LHX3 interaction, may explain differences in sequence specificity of the different complexes. Interacts with LDB2. May interact with CITED2/MRG1.

The protein resides in the nucleus. Transcription factor. Recognizes and binds to the consensus sequence motif 5'-AATTAATTA-3' in the regulatory elements of target genes, such as glycoprotein hormones alpha chain CGA and visual system homeobox CHX10, positively modulating transcription; transcription can be co-activated by LDB2. Synergistically enhances transcription from the prolactin promoter in cooperation with POU1F1/Pit-1. Required for the establishment of the specialized cells of the pituitary gland and the nervous system. Involved in the development of interneurons and motor neurons in cooperation with LDB1 and ISL1. The chain is LIM/homeobox protein Lhx3 (LHX3) from Sus scrofa (Pig).